The primary structure comprises 112 residues: Frizzy aggregation protein FrzB (112 aa).

Necessary for proper aggregation of cells to form fruiting bodies. FRZ genes define a system of signal transduction analogous to the enterobacterial chemotaxis systems. The chain is Frizzy aggregation protein FrzB (frzB) from Myxococcus xanthus.